A 159-amino-acid chain; its full sequence is Phosphopantetheine adenylyltransferase (159 aa).

Substrate is bound at residue threonine 10. Residues 10–11 and histidine 18 contribute to the ATP site; that span reads TF. Substrate is bound by residues lysine 42, methionine 74, and arginine 88. Residues 89–91, glutamate 99, and 124–130 contribute to the ATP site; these read GLR and WSFISSS.

This sequence belongs to the bacterial CoaD family. As to quaternary structure, homohexamer. It depends on Mg(2+) as a cofactor.

It is found in the cytoplasm. The catalysed reaction is (R)-4'-phosphopantetheine + ATP + H(+) = 3'-dephospho-CoA + diphosphate. It functions in the pathway cofactor biosynthesis; coenzyme A biosynthesis; CoA from (R)-pantothenate: step 4/5. Reversibly transfers an adenylyl group from ATP to 4'-phosphopantetheine, yielding dephospho-CoA (dPCoA) and pyrophosphate. The chain is Phosphopantetheine adenylyltransferase from Yersinia pseudotuberculosis serotype O:3 (strain YPIII).